Here is a 299-residue protein sequence, read N- to C-terminus: Aliphatic sulfonates import ATP-binding protein SsuB (299 aa).

Residues 36–257 (LHVQQVIKRY…QHGSAAFAQI (222 aa)) enclose the ABC transporter domain. An ATP-binding site is contributed by 68-75 (GRSGCGKS).

Belongs to the ABC transporter superfamily. Aliphatic sulfonates importer (TC 3.A.1.17.2) family. In terms of assembly, the complex is composed of two ATP-binding proteins (SsuB), two transmembrane proteins (SsuC) and a solute-binding protein (SsuA).

It is found in the cell inner membrane. It catalyses the reaction ATP + H2O + aliphatic sulfonate-[sulfonate-binding protein]Side 1 = ADP + phosphate + aliphatic sulfonateSide 2 + [sulfonate-binding protein]Side 1.. In terms of biological role, part of the ABC transporter complex SsuABC involved in aliphatic sulfonates import. Responsible for energy coupling to the transport system. In Cupriavidus pinatubonensis (strain JMP 134 / LMG 1197) (Cupriavidus necator (strain JMP 134)), this protein is Aliphatic sulfonates import ATP-binding protein SsuB.